The chain runs to 129 residues: MSNVPVELKYSKEHEWLRKEADGTYTVGITEHAQELLGDMVFVDLPDVGATVAAGDDCAVAESVKAASDIYAPVSGEIVAVNDALSDSPELVNSEPYAGGWIFKIKASDESEIDSLLDATAYEALLEDE.

One can recognise a Lipoyl-binding domain in the interval 24 to 106 (TYTVGITEHA…YAGGWIFKIK (83 aa)). The residue at position 65 (Lys-65) is an N6-lipoyllysine.

It belongs to the GcvH family. As to quaternary structure, the glycine cleavage system is composed of four proteins: P, T, L and H. The cofactor is (R)-lipoate.

Functionally, the glycine cleavage system catalyzes the degradation of glycine. The H protein shuttles the methylamine group of glycine from the P protein to the T protein. This chain is Glycine cleavage system H protein, found in Citrobacter koseri (strain ATCC BAA-895 / CDC 4225-83 / SGSC4696).